A 311-amino-acid chain; its full sequence is GTP cyclohydrolase FolE2 (311 aa).

It belongs to the GTP cyclohydrolase IV family.

The enzyme catalyses GTP + H2O = 7,8-dihydroneopterin 3'-triphosphate + formate + H(+). Its pathway is cofactor biosynthesis; 7,8-dihydroneopterin triphosphate biosynthesis; 7,8-dihydroneopterin triphosphate from GTP: step 1/1. Converts GTP to 7,8-dihydroneopterin triphosphate. This Xanthomonas campestris pv. campestris (strain 8004) protein is GTP cyclohydrolase FolE2.